The chain runs to 465 residues: ATP synthase subunit beta (465 aa).

Residue 148–155 (GGAGVGKT) coordinates ATP.

The protein belongs to the ATPase alpha/beta chains family. In terms of assembly, F-type ATPases have 2 components, CF(1) - the catalytic core - and CF(0) - the membrane proton channel. CF(1) has five subunits: alpha(3), beta(3), gamma(1), delta(1), epsilon(1). CF(0) has three main subunits: a(1), b(2) and c(9-12). The alpha and beta chains form an alternating ring which encloses part of the gamma chain. CF(1) is attached to CF(0) by a central stalk formed by the gamma and epsilon chains, while a peripheral stalk is formed by the delta and b chains.

The protein localises to the cell inner membrane. The enzyme catalyses ATP + H2O + 4 H(+)(in) = ADP + phosphate + 5 H(+)(out). Functionally, produces ATP from ADP in the presence of a proton gradient across the membrane. The catalytic sites are hosted primarily by the beta subunits. This Neisseria meningitidis serogroup C (strain 053442) protein is ATP synthase subunit beta.